The sequence spans 172 residues: Protein GrpE (172 aa).

The interval 1–23 is disordered; sequence MNQDHPECDSEELTQNSPETDPL.

The protein belongs to the GrpE family. In terms of assembly, homodimer.

The protein localises to the cytoplasm. In terms of biological role, participates actively in the response to hyperosmotic and heat shock by preventing the aggregation of stress-denatured proteins, in association with DnaK and GrpE. It is the nucleotide exchange factor for DnaK and may function as a thermosensor. Unfolded proteins bind initially to DnaJ; upon interaction with the DnaJ-bound protein, DnaK hydrolyzes its bound ATP, resulting in the formation of a stable complex. GrpE releases ADP from DnaK; ATP binding to DnaK triggers the release of the substrate protein, thus completing the reaction cycle. Several rounds of ATP-dependent interactions between DnaJ, DnaK and GrpE are required for fully efficient folding. The polypeptide is Protein GrpE (Xylella fastidiosa (strain 9a5c)).